The primary structure comprises 130 residues: Small ribosomal subunit protein uS8 (130 aa).

This sequence belongs to the universal ribosomal protein uS8 family. Part of the 30S ribosomal subunit.

In terms of biological role, one of the primary rRNA binding proteins, it binds directly to 16S rRNA central domain where it helps coordinate assembly of the platform of the 30S subunit. The polypeptide is Small ribosomal subunit protein uS8 (Thermococcus kodakarensis (strain ATCC BAA-918 / JCM 12380 / KOD1) (Pyrococcus kodakaraensis (strain KOD1))).